We begin with the raw amino-acid sequence, 314 residues long: Short chain dehydrogenase atnD (314 aa).

4 residues coordinate NADP(+): Leu41, Lys66, Asp90, and Asn116. Catalysis depends on proton donor residues Ser171 and Tyr204. 2 residues coordinate NADP(+): Tyr204 and Lys208. Lys208 (lowers pKa of active site Tyr) is an active-site residue.

This sequence belongs to the short-chain dehydrogenases/reductases (SDR) family.

It functions in the pathway secondary metabolite biosynthesis. Short chain dehydrogenase; part of the gene cluster that mediates the biosynthesis of aspercryptins, linear lipopeptides built from six amino acids including 2 highly unusual and nonproteogenic amino acids, 2-amino-octanoic acid (2aoa) and 2-amino-dodecanol (2adol). The core structure of aspercryptins is as follows: Ser/Ala-Thr-Ile/Val-2aoa-Asn-2adol. The first step of aspercryptin biosynthesis is the generation of the fatty acid precursors, octanoic and dodecanoic acids, by the FAS subunits atnF and atnM. The fatty acid precursors are likely transformed into the corresponding alpha-amino fatty acids in three steps. First, they are hydroxylated by the cytochrome P450 monooxygenase atnE, then oxidized to the corresponding alpha-keto acids by the NAD(P)-dependent oxidoreductase atnD, and finally converted to the alpha-amino fatty acids by the PLP-dependent aminotransferases atnH or atnJ. the alpha-amino fatty acids, 2-amino-octanoic and 2-amino-dodecanoic acids, are recognized, activated, and covalently tethered to the NRPS atnA by its fourth and sixth adenylation domains. The second module of atnA is the Thr module and contains an epimerase (E) domain responsible for the epimerization of Thr to D-allo-Thr. Additionally, despite atnA having only one epimerase domain, the first amino acid of aspercryptin A1 is D-Ser, suggesting that serine is either loaded directly as D-Ser on the first module or that the epimerase domain in the threonine module epimerizes both L-Ser and L-Thr. After condensation of the hexapeptide of aspercryptin, the C-terminal reductase (TE) domain might be involved in the reductive release and production of the aldehyde hexapeptide. Further reduction would generate aspercryptins. The variety of aspercryptins produced reflects the flexibility of the atnA NRPS, allowing incorporation of alanine instead of serine, valine for isoleucine, and a C10 fatty amino alcohol instead of the C12 version. AtnB seems to be involved in the selectivity for Ile versus Val by the third module. Moreover, type B, C and D aspercryptins have an additional N-terminal cichorine, acetyl and propionyl group respectively. This Emericella nidulans (strain FGSC A4 / ATCC 38163 / CBS 112.46 / NRRL 194 / M139) (Aspergillus nidulans) protein is Short chain dehydrogenase atnD.